Consider the following 357-residue polypeptide: Histidinol-phosphate aminotransferase 1 (357 aa).

K210 carries the N6-(pyridoxal phosphate)lysine modification.

It belongs to the class-II pyridoxal-phosphate-dependent aminotransferase family. Histidinol-phosphate aminotransferase subfamily. As to quaternary structure, homodimer. The cofactor is pyridoxal 5'-phosphate.

It carries out the reaction L-histidinol phosphate + 2-oxoglutarate = 3-(imidazol-4-yl)-2-oxopropyl phosphate + L-glutamate. It functions in the pathway amino-acid biosynthesis; L-histidine biosynthesis; L-histidine from 5-phospho-alpha-D-ribose 1-diphosphate: step 7/9. This is Histidinol-phosphate aminotransferase 1 from Methylococcus capsulatus (strain ATCC 33009 / NCIMB 11132 / Bath).